A 138-amino-acid chain; its full sequence is Small ribosomal subunit protein uS11 (138 aa).

Residues 1–12 show a composition bias toward low complexity; the sequence is MAPKKPGAAGPK. Disordered stretches follow at residues 1 to 27 and 119 to 138; these read MAPK…NVPH and ISDV…RRRV. The segment covering 13–22 has biased composition (basic residues); the sequence is KAQKTRRREK.

Belongs to the universal ribosomal protein uS11 family. As to quaternary structure, part of the 30S ribosomal subunit. Interacts with proteins S7 and S18. Binds to IF-3.

Located on the platform of the 30S subunit, it bridges several disparate RNA helices of the 16S rRNA. Forms part of the Shine-Dalgarno cleft in the 70S ribosome. This is Small ribosomal subunit protein uS11 from Mycobacteroides abscessus (strain ATCC 19977 / DSM 44196 / CCUG 20993 / CIP 104536 / JCM 13569 / NCTC 13031 / TMC 1543 / L948) (Mycobacterium abscessus).